Here is a 37-residue protein sequence, read N- to C-terminus: Cytochrome b6-f complex subunit 5 (37 aa).

Residues Leu-5–Ala-25 form a helical membrane-spanning segment.

The protein belongs to the PetG family. As to quaternary structure, the 4 large subunits of the cytochrome b6-f complex are cytochrome b6, subunit IV (17 kDa polypeptide, PetD), cytochrome f and the Rieske protein, while the 4 small subunits are PetG, PetL, PetM and PetN. The complex functions as a dimer.

It is found in the plastid. It localises to the chloroplast thylakoid membrane. Functionally, component of the cytochrome b6-f complex, which mediates electron transfer between photosystem II (PSII) and photosystem I (PSI), cyclic electron flow around PSI, and state transitions. PetG is required for either the stability or assembly of the cytochrome b6-f complex. This chain is Cytochrome b6-f complex subunit 5, found in Chlamydomonas reinhardtii (Chlamydomonas smithii).